Consider the following 962-residue polypeptide: Leucine--tRNA ligase (962 aa).

Positions 68 to 79 (PYPSGAGLHVGH) match the 'HIGH' region motif. Residues 559–582 (DYSPRTFDPDDANTSPETPLSRNE) form a disordered region. Positions 570-579 (ANTSPETPLS) are enriched in polar residues. The short motif at 733–737 (KMGKS) is the 'KMSKS' region element. Residue Lys-736 coordinates ATP.

The protein belongs to the class-I aminoacyl-tRNA synthetase family.

The protein resides in the cytoplasm. It catalyses the reaction tRNA(Leu) + L-leucine + ATP = L-leucyl-tRNA(Leu) + AMP + diphosphate. This is Leucine--tRNA ligase from Streptomyces avermitilis (strain ATCC 31267 / DSM 46492 / JCM 5070 / NBRC 14893 / NCIMB 12804 / NRRL 8165 / MA-4680).